Here is a 140-residue protein sequence, read N- to C-terminus: Arsenate reductase ArsI2 (140 aa).

Cysteine 10 (nucleophile; cysteine thioarsenate intermediate) is an active-site residue.

This sequence belongs to the ArsC family.

It carries out the reaction [glutaredoxin]-dithiol + arsenate + glutathione + H(+) = glutathionyl-S-S-[glutaredoxin] + arsenite + H2O. Catalyzes the reduction of arsenate [As(V)] to arsenite [As(III)]. Does not constitute the major arsenate reductase in cells: essential only in the absence of ArsC (AC P74313). The protein is Arsenate reductase ArsI2 of Synechocystis sp. (strain ATCC 27184 / PCC 6803 / Kazusa).